A 110-amino-acid chain; its full sequence is Protein RALF-like 4 (110 aa).

A signal peptide spans 1–23 (MGVKMLLIFGLLILAMVAKSVNA). Residues 24 to 58 (TYPLTKSCINGQGCIGEDDELESLMDSETNRRQLA) constitute a propeptide, removed in mature form. Cystine bridges form between cysteine 76–cysteine 86 and cysteine 99–cysteine 105.

This sequence belongs to the plant rapid alkalinization factor (RALF) family. Post-translationally, proteolytically cleaved, probably by S1P, a subtilisin-like serine protease (subtilase).

Its subcellular location is the secreted. Functionally, cell signaling peptide that may regulate plant stress, growth, and development. Mediates a rapid alkalinization of extracellular space by mediating a transient increase in the cytoplasmic Ca(2+) concentration leading to a calcium-dependent signaling events through a cell surface receptor and a concomitant activation of some intracellular mitogen-activated protein kinases. In Arabidopsis thaliana (Mouse-ear cress), this protein is Protein RALF-like 4 (RALFL4).